The chain runs to 234 residues: Riboflavin kinase (234 aa).

The interval 1–98 (MAESTTAVGH…QEIFGDNSSV (98 aa)) is H-T-H motif-like. The tract at residues 99-234 (VELTGTVTSG…RITVQLKPKE (136 aa)) is riboflavin kinase. Residue 108 to 113 (GMGEGR) coordinates CDP. Thr-137 and Asn-139 together coordinate Mg(2+). FMN contacts are provided by Thr-199 and Glu-207. Position 212–215 (212–215 (ERLR)) interacts with CDP.

The protein belongs to the archaeal riboflavin kinase family. It depends on Mg(2+) as a cofactor.

The enzyme catalyses riboflavin + CTP = CDP + FMN + H(+). The protein operates within cofactor biosynthesis; FMN biosynthesis; FMN from riboflavin (CTP route): step 1/1. Its function is as follows. Catalyzes the CTP-dependent phosphorylation of riboflavin (vitamin B2) to form flavin mononucleotide (FMN). The protein is Riboflavin kinase (ribK) of Haloquadratum walsbyi (strain DSM 16790 / HBSQ001).